The chain runs to 200 residues: Small ribosomal subunit protein uS4 (200 aa).

The disordered stretch occupies residues 22–42 (TGKELEKRPYAPGPHGPGQRK). Positions 92 to 155 (TRLDNLVYRL…QNLAVVKESV (64 aa)) constitute an S4 RNA-binding domain.

Belongs to the universal ribosomal protein uS4 family. Part of the 30S ribosomal subunit. Contacts protein S5. The interaction surface between S4 and S5 is involved in control of translational fidelity.

Functionally, one of the primary rRNA binding proteins, it binds directly to 16S rRNA where it nucleates assembly of the body of the 30S subunit. In terms of biological role, with S5 and S12 plays an important role in translational accuracy. The protein is Small ribosomal subunit protein uS4 of Bacillus pumilus (strain SAFR-032).